Consider the following 375-residue polypeptide: Alpha-2,8-sialyltransferase 8B (375 aa).

Residues 1–6 are Cytoplasmic-facing; that stretch reads MQLQFR. Residues 7–23 form a helical; Signal-anchor for type II membrane protein membrane-spanning segment; the sequence is SWMLAALTLLVVFLIFA. At 24 to 375 the chain is on the lumenal side; that stretch reads DISEIEEEIG…LTVGQCDGAT (352 aa). Residues Asn-60, Asn-72, Asn-89, and Asn-134 are each glycosylated (N-linked (GlcNAc...) asparagine). Disulfide bonds link Cys-157/Cys-307 and Cys-171/Cys-371. CMP-N-acetyl-beta-neuraminate-binding residues include Asn-162 and Asn-185. Residues Asn-219 and Asn-234 are each glycosylated (N-linked (GlcNAc...) asparagine). The CMP-N-acetyl-beta-neuraminate site is built by Thr-294, Thr-295, Gly-296, Trp-316, Tyr-329, and His-330. The active-site Proton donor/acceptor is His-346.

The protein belongs to the glycosyltransferase 29 family. Post-translationally, autopolysialylated. Autopolysialylation is not a prerequisite for the polysialylation acitity, but enhances the polysialylation acitity.

The protein localises to the golgi apparatus membrane. It localises to the secreted. Its subcellular location is the cell membrane. The enzyme catalyses [N-acetyl-alpha-D-neuraminosyl-(2-&gt;8)](n) + CMP-N-acetyl-beta-neuraminate = [N-acetyl-alpha-D-neuraminosyl-(2-&gt;8)](n+1) + CMP + H(+). It functions in the pathway protein modification; protein glycosylation. Its function is as follows. Catalyzes the transfer of a sialic acid from a CMP-linked sialic acid donor onto a terminal alpha-2,3-, alpha-2,6-, or alpha-2,8-linked sialic acid of an N-linked glycan acceptor through alpha-2,8-linkages. Therefore, participates in polysialic acid synthesis on various sialylated N-acetyllactosaminyl oligosaccharides (alpha-2,3-, alpha-2,6-, or alpha-2,8-linked sialic acid), including NCAM1, NCAM1 N-glycans, FETUB N-glycans, and to a lesser extent sialylparagloboside (SPG) and AHSG, which does not require the initial addition of an alpha 2,8-sialic acid. However, does not exhibit sialic acid-polymerase activity. Catalyzes polysialic acid synthesis in the hippocampal on NCAM1 and supports neurite outgrowth. ST8SIA2-mediated polysialylation influences on oligodendrocyte differentiation and may promote the integrity of myelin and axons. This chain is Alpha-2,8-sialyltransferase 8B, found in Pan troglodytes (Chimpanzee).